The sequence spans 453 residues: Trypanin (453 aa).

Residues M1 to G10 are compositionally biased toward basic and acidic residues. A disordered region spans residues M1–V22. 2 coiled-coil regions span residues T60–V156 and S185–E377.

This sequence belongs to the DRC4 family.

The protein resides in the cytoplasm. It is found in the cytoskeleton. It localises to the cell projection. The protein localises to the cilium. Its subcellular location is the flagellum. Functionally, cytoskeletal linker that plays a central role in the flagellum cell motility. Required for directional cell motility. Plays a role as part of a dynein regulatory system that regulates flagellar beat in response to signals from the central pair apparatus and radial spokes in procyclic cells. Also plays an essential role in the bloodstream form of the trypanosomes as its silencing is lethal for the circulating form. The sequence is that of Trypanin from Trypanosoma brucei rhodesiense.